Reading from the N-terminus, the 342-residue chain is Serine/threonine-protein kinase ISR1 (342 aa).

The Protein kinase domain occupies 59 to 342 (WRLTRVLGCG…SNARVAEHAF (284 aa)). ATP is bound by residues 65-73 (LGCGSVACV) and Lys84. The active-site Proton acceptor is the Asp190.

Belongs to the protein kinase superfamily. Ser/Thr protein kinase family.

The enzyme catalyses L-seryl-[protein] + ATP = O-phospho-L-seryl-[protein] + ADP + H(+). The catalysed reaction is L-threonyl-[protein] + ATP = O-phospho-L-threonyl-[protein] + ADP + H(+). Its function is as follows. Probable serine/threonine protein kinase which may function redundantly with MPK1-independent branch of the PCK1 pathway. The chain is Serine/threonine-protein kinase ISR1 (ISR1) from Eremothecium gossypii (strain ATCC 10895 / CBS 109.51 / FGSC 9923 / NRRL Y-1056) (Yeast).